The chain runs to 459 residues: Glutamate--tRNA ligase 2 (459 aa).

Positions 8–18 match the 'HIGH' region motif; sequence PSPTGYLHIGG. Residues 237–241 carry the 'KMSKS' region motif; it reads KLSKR. An ATP-binding site is contributed by Lys240.

This sequence belongs to the class-I aminoacyl-tRNA synthetase family. Glutamate--tRNA ligase type 1 subfamily. Monomer.

It localises to the cytoplasm. The enzyme catalyses tRNA(Glu) + L-glutamate + ATP = L-glutamyl-tRNA(Glu) + AMP + diphosphate. In terms of biological role, catalyzes the attachment of glutamate to tRNA(Glu) in a two-step reaction: glutamate is first activated by ATP to form Glu-AMP and then transferred to the acceptor end of tRNA(Glu). The polypeptide is Glutamate--tRNA ligase 2 (Campylobacter concisus (strain 13826)).